Consider the following 65-residue polypeptide: Small ribosomal subunit protein bS21A (65 aa).

The protein belongs to the bacterial ribosomal protein bS21 family.

The sequence is that of Small ribosomal subunit protein bS21A from Francisella tularensis subsp. tularensis (strain FSC 198).